Consider the following 213-residue polypeptide: EEF1A lysine methyltransferase 1 (213 aa).

This sequence belongs to the class I-like SAM-binding methyltransferase superfamily. EFM5 family.

The protein resides in the cytoplasm. The catalysed reaction is L-lysyl-[protein] + 3 S-adenosyl-L-methionine = N(6),N(6),N(6)-trimethyl-L-lysyl-[protein] + 3 S-adenosyl-L-homocysteine + 3 H(+). Protein-lysine methyltransferase that selectively catalyzes the trimethylation of EEF1A at 'Lys-79'. The protein is EEF1A lysine methyltransferase 1 of Gallus gallus (Chicken).